We begin with the raw amino-acid sequence, 184 residues long: Protein GrpE (184 aa).

Positions 1-26 are disordered; sequence MTAPQEPVDSTPESGENAATPGLEDD.

It belongs to the GrpE family. Homodimer.

The protein resides in the cytoplasm. In terms of biological role, participates actively in the response to hyperosmotic and heat shock by preventing the aggregation of stress-denatured proteins, in association with DnaK and GrpE. It is the nucleotide exchange factor for DnaK and may function as a thermosensor. Unfolded proteins bind initially to DnaJ; upon interaction with the DnaJ-bound protein, DnaK hydrolyzes its bound ATP, resulting in the formation of a stable complex. GrpE releases ADP from DnaK; ATP binding to DnaK triggers the release of the substrate protein, thus completing the reaction cycle. Several rounds of ATP-dependent interactions between DnaJ, DnaK and GrpE are required for fully efficient folding. This chain is Protein GrpE, found in Bordetella bronchiseptica (strain ATCC BAA-588 / NCTC 13252 / RB50) (Alcaligenes bronchisepticus).